The following is a 606-amino-acid chain: Arginine--tRNA ligase (606 aa).

A 'HIGH' region motif is present at residues 126-136 (PNTNKPLHLGH).

The protein belongs to the class-I aminoacyl-tRNA synthetase family. Monomer.

It localises to the cytoplasm. It catalyses the reaction tRNA(Arg) + L-arginine + ATP = L-arginyl-tRNA(Arg) + AMP + diphosphate. The protein is Arginine--tRNA ligase of Phocaeicola vulgatus (strain ATCC 8482 / DSM 1447 / JCM 5826 / CCUG 4940 / NBRC 14291 / NCTC 11154) (Bacteroides vulgatus).